Reading from the N-terminus, the 72-residue chain is MRPVVSTGKAWCCTVLSAFGVVILSVIAHLFNTNHESFVGSINDPEDGPAYVIFSYLFRRYPFTISYISPPY.

The helical transmembrane segment at 11–31 (WCCTVLSAFGVVILSVIAHLF) threads the bilayer.

Its subcellular location is the membrane. This is an uncharacterized protein from Saccharomyces cerevisiae (strain ATCC 204508 / S288c) (Baker's yeast).